A 434-amino-acid chain; its full sequence is Eukaryotic peptide chain release factor subunit 1-2 (434 aa).

The residue at position 2 (A2) is an N-acetylalanine.

This sequence belongs to the eukaryotic release factor 1 family. As to quaternary structure, heterodimer of two subunits, one of which binds GTP.

Its subcellular location is the cytoplasm. In terms of biological role, directs the termination of nascent peptide synthesis (translation) in response to the termination codons UAA, UAG and UGA. Modulates plant growth and development. This is Eukaryotic peptide chain release factor subunit 1-2 from Arabidopsis thaliana (Mouse-ear cress).